We begin with the raw amino-acid sequence, 64 residues long: Alpha-conotoxin Lt14.1 (64 aa).

An N-terminal signal peptide occupies residues 1 to 20 (MKLSVMFIVFLMLTMPMTCA). Positions 21–50 (GISRSATNGGEADVRAHDKAANLMALLQER) are excised as a propeptide. Disulfide bonds link cysteine 52–cysteine 60 and cysteine 56–cysteine 63. Cysteine 63 carries the cysteine amide modification.

Belongs to the conotoxin L superfamily. Post-translationally, may contain a 4-hydroxyproline. Expressed by the venom duct.

The protein resides in the secreted. In terms of biological role, alpha-conotoxins act on postsynaptic membranes, they bind to the nicotinic acetylcholine receptors (nAChR) and thus inhibit them. This synthetic peptide displays analgesic activity in a hot plate assay. Analgesia is also observed against second phase pain in formalin-induced inflammatory pain model, and in a rat model of mechanically-induced pain. Effects downstream of nAChR are inhibition of calcium influx, inhibition of ERK1/2 phosphorylation and inhibition of c-fos/NOS expression. Genes associated with drug dependence are not up-regulated by this toxin. Treatment with this toxin reversed morphine withdrawal symptoms in mice. The polypeptide is Alpha-conotoxin Lt14.1 (Conus litteratus (Lettered cone)).